Here is a 269-residue protein sequence, read N- to C-terminus: Formamidopyrimidine-DNA glycosylase (269 aa).

Pro-2 serves as the catalytic Schiff-base intermediate with DNA. Glu-3 acts as the Proton donor in catalysis. The Proton donor; for beta-elimination activity role is filled by Lys-57. 3 residues coordinate DNA: His-90, Arg-109, and Lys-150. The segment at 235–269 adopts an FPG-type zinc-finger fold; sequence QVYGRKGEPCRVCGTPIVATKHAQRATFYCRHCQK. The active-site Proton donor; for delta-elimination activity is Arg-259.

It belongs to the FPG family. In terms of assembly, monomer. Requires Zn(2+) as cofactor.

It catalyses the reaction Hydrolysis of DNA containing ring-opened 7-methylguanine residues, releasing 2,6-diamino-4-hydroxy-5-(N-methyl)formamidopyrimidine.. The catalysed reaction is 2'-deoxyribonucleotide-(2'-deoxyribose 5'-phosphate)-2'-deoxyribonucleotide-DNA = a 3'-end 2'-deoxyribonucleotide-(2,3-dehydro-2,3-deoxyribose 5'-phosphate)-DNA + a 5'-end 5'-phospho-2'-deoxyribonucleoside-DNA + H(+). Its function is as follows. Involved in base excision repair of DNA damaged by oxidation or by mutagenic agents. Acts as a DNA glycosylase that recognizes and removes damaged bases. Has a preference for oxidized purines, such as 7,8-dihydro-8-oxoguanine (8-oxoG). Has AP (apurinic/apyrimidinic) lyase activity and introduces nicks in the DNA strand. Cleaves the DNA backbone by beta-delta elimination to generate a single-strand break at the site of the removed base with both 3'- and 5'-phosphates. This Salmonella heidelberg (strain SL476) protein is Formamidopyrimidine-DNA glycosylase.